The sequence spans 172 residues: Low molecular mass early light-inducible protein HV90, chloroplastic (172 aa).

A chloroplast-targeting transit peptide spans 1–38 (MATMMSMSSFAGAAVVPRSSASSFGARSLPALGRRALV). The next 2 helical transmembrane spans lie at 106–126 (GQAW…VPLL) and 150–170 (FAML…APFI).

The protein belongs to the ELIP/psbS family.

It is found in the plastid. Its subcellular location is the chloroplast membrane. Functionally, probably involved in the integration of pigments into the mature pigment-protein complexes. The chain is Low molecular mass early light-inducible protein HV90, chloroplastic from Hordeum vulgare (Barley).